We begin with the raw amino-acid sequence, 355 residues long: MKIRIDIPHHPYDIQIEKGCMAQAGQWLRELWQPQKVVIVTDNHVASLYAEKVKLSLEDAGFQVAVFDFLEGEERKNLTTVQKVYEFLVKQGLTRSDGIVALGGGVVGDLAGFVASTYMRGIHFVQIPTSLTAQVDSSIGGKTGVNTPFAKNMVGTFAQPDGVLIDPLVLETLGKRELIEGMGEVIKYGLIEDPELWALLTGLNGSVESILEHAETLIEHSCQVKRKMVVEDELDNGIRLYLNFGHTIGHAIEATAGYGKVMHGEAVAMGMVQISKVAEEKGLMPAGITQSITEMCQKFGLPVDYENWEVGKLYQALTHDKKARGNTLKLVLVPELGSATIHPVSLEEMKDYLVK.

NAD(+) contacts are provided by residues 71–76 (EGEERK), 105–109 (GVVGD), 129–130 (TS), lysine 142, and lysine 151. Glutamate 184, histidine 246, and histidine 263 together coordinate Zn(2+).

Belongs to the sugar phosphate cyclases superfamily. Dehydroquinate synthase family. Requires NAD(+) as cofactor. It depends on Co(2+) as a cofactor. Zn(2+) is required as a cofactor.

The protein resides in the cytoplasm. It catalyses the reaction 7-phospho-2-dehydro-3-deoxy-D-arabino-heptonate = 3-dehydroquinate + phosphate. Its pathway is metabolic intermediate biosynthesis; chorismate biosynthesis; chorismate from D-erythrose 4-phosphate and phosphoenolpyruvate: step 2/7. In terms of biological role, catalyzes the conversion of 3-deoxy-D-arabino-heptulosonate 7-phosphate (DAHP) to dehydroquinate (DHQ). The sequence is that of 3-dehydroquinate synthase from Streptococcus pneumoniae serotype 4 (strain ATCC BAA-334 / TIGR4).